A 2082-amino-acid polypeptide reads, in one-letter code: MAYFLPSFFQKRLLRYALSRLELVDTEALDLDSLGIRWGQRSTVELRDIGLRLEKLSTLLRLPPSSELLSARIRLLRLTVPADIYSSGIIFQTSGIDVHLRLPLNDVSADQDTHRSPTDDTGDDHVLPNPTDLAESFLQAEPKEEKEELQAAISSQSQVLQHTSTSSSDDEEEFGLGEEAVSLPSFVAGFLKGVVERLQVEVEDVSIRVDVETKQDGPSKRQPEEKPDLVTGLISVRQINVGAVSKSHDSEEGILRWGKRQISVSDVNLALISDPIVFSNYSRFTAPPLSPSTPVQSRPSQPPSEVMSPSPELNPSDSNPGLGMTQSTIFAPPQSDDEPVPEAPHELEMAGSVYTYDGRFSDADTEETRSYGHLGDSQNFSDDDKLLDNPDYLDSVIDSHLHDEDLERSVNLPRDDAPSAREEDTPRLHDSSTFNFEPTMAHHTLQEVSSPTIHGQVLEDRTGSFGSASLGRDASSEHSLPEDSLSENQHAEEPQHEVRAHMSGSQPAPPSEEGSSSSTSNSFRDGDLSESKIYSHEEAQSMYMSAISHGSTSRSFVPNIPGAWDSPGSTATRYFDVHNRSQCSGDTNRTRDEKDETTAATPRLHAQAGSHIPQEYPLDGSRTAHSEATDKGSFESTQGLNKLNDIAKRFLTIDKMSIWVPSRDGTDEPSGAVSEMSFSHGGVDPNVSGHSERRSYPKRSQDETAIELHSAEIHFDISTGWLLAKVGQRVVDAFAHNDSETPKKSRSQQDSHSDQAISLSFGKFSIKFVEHIPGHAYPPEDSRIHSPTYFGLMHEDVLLQTTVAGLQAHYSETGNATKLRLELAKFTLGFASEDLISFSEDLKMRESVRDVLSPVHGDVSLSLTKSADSARVNIATLPLQVNINVQRLEDVLGWIGGLSTILELGNSIPSVSGVKAQKEPPKRSRGVHFEPSPPPVKESRQPSIPWKVDSRIGGMALDVVGETHYLKLRTTAVKVVSRQKGIAVQIDKAKLSGPLSLEGTRDAPAKVNFTNIRVEFLFSPDDDDLDRLLSLITPSKDKYDEDDDIMLDTLLRQRRQGSILRATVDGARVAISRIQDLEHLSQLGDELGKLSNVTKYLPEDDRPGILSLALVRDFEARMHVGGQVGDITVRLKEAETAYISIPSLVAARLGSMTVVRNEIEELVGEALPLHMAQAQHPMLMARFIADEMEPTIKVKVYNLRAEYTVPSMVAFLGLSDDMTAGKVAENMTSSLVNLADLPPPHISPVSGGHESPRGPVKPIKLAVVLRDSVIGLNPRGTAAKGLLVLTNAKFSGAIHDPASSEATLDLRKASVMVIDDVQNIGITDNPRQGRWTTPQSDQVHSFIEMGFVPISSISSATATIRIMQLSEDGTKSLDVEFRDDLLILETCADSTQTLISIVNGLQPPTPPSVAVKYRTEVLPIQDMLASFSGDAFATDAASPEHAAEGSSDLAQPANTKGNQIEDELEYVSDFYPVKPGSENASLHENLAGSGSNELLDSFHSQYYMSSSVSELDFRDDHFAKQSAVGGTAHRWDSTQNTYGLSDDSKLQKSPLRIRVRDAHVIWNLFDGYDWQRTRDTISKAVKDVEKRATEKRARVGNRASPGFDDDEESVIGDCLFNSIYIGIPANKDPRELRQDINRGIDDLASETGSYATTTTVTGATARQNHSPPFKKKLRLSRSKYHKMTFELKGICADLVVFPPDSGETQSSLDVRIKDLEIFDHVPTSTWKKFATYMHEAGEKESGTSMVHLEVLTVRPVPELAASEIVLKATILPLRLHVDQDALDFLSRFFEFRDDSAPASPSPQDIPFLQRVEVNSIPVKLDFKPKRVDYAGLQSGRTTEFMNFFVLDGADMVMRHVIIYGIAGFDKLGQTLNDIWMPDIKRNQLPSVLAGLAPIRSLVNVGGGVKDLVVVPMREYRKDGRIVRSIQKGAWSFAKTTSNELVKLGAKLAIGTQTVLQGAEEMLTSPNAPVPVSEEDSTDEEEAKKISLYADQPIGVVQGLRGAFRGLERDLLLARDAIVAVPGEIVESGSATAAAKAVWKRAPTVVLRPAIGVSKAVGQTLLGAGNTLDPSNRRKMEDKYKRH.

Disordered stretches follow at residues 108–130 (SADQDTHRSPTDDTGDDHVLPNP), 144–175 (EEKEELQAAISSQSQVLQHTSTSSSDDEEEFG), 285–343 (TAPP…VPEA), 365–435 (TEET…STFN), 462–527 (TGSF…RDGD), 580–636 (RSQC…SFES), 662–702 (SRDG…RSQD), 912–943 (SGVKAQKEPPKRSRGVHFEPSPPPVKESRQPS), 1435–1454 (DAASPEHAAEGSSDLAQPAN), and 2062–2082 (GAGNTLDPSNRRKMEDKYKRH). Positions 111 to 126 (QDTHRSPTDDTGDDHV) are enriched in basic and acidic residues. Composition is skewed to polar residues over residues 152–162 (AISSQSQVLQH) and 311–329 (PELNPSDSNPGLGMTQSTI). Composition is skewed to basic and acidic residues over residues 397-430 (IDSHLHDEDLERSVNLPRDDAPSAREEDTPRLHD) and 489-500 (QHAEEPQHEVRA). Residues 503–522 (SGSQPAPPSEEGSSSSTSNS) are compositionally biased toward low complexity. 3 stretches are compositionally biased toward basic and acidic residues: residues 588 to 597 (NRTRDEKDET), 622 to 633 (RTAHSEATDKGS), and 690 to 702 (HSERRSYPKRSQD). The segment covering 2070–2082 (SNRRKMEDKYKRH) has biased composition (basic and acidic residues).

The protein belongs to the ATG2 family.

The protein localises to the preautophagosomal structure membrane. It is found in the endoplasmic reticulum membrane. The catalysed reaction is a 1,2-diacyl-sn-glycero-3-phosphocholine(in) = a 1,2-diacyl-sn-glycero-3-phosphocholine(out). It carries out the reaction a 1,2-diacyl-sn-glycero-3-phospho-L-serine(in) = a 1,2-diacyl-sn-glycero-3-phospho-L-serine(out). The enzyme catalyses a 1,2-diacyl-sn-glycero-3-phosphoethanolamine(in) = a 1,2-diacyl-sn-glycero-3-phosphoethanolamine(out). In terms of biological role, lipid transfer protein required for autophagosome completion and peroxisome degradation. Tethers the edge of the isolation membrane (IM) to the endoplasmic reticulum (ER) and mediates direct lipid transfer from ER to IM for IM expansion. Atg2 binds to the ER exit site (ERES), which is the membrane source for autophagosome formation, using basic residues in its N-terminal region (NR) and to the expanding edge of the IM through its C-terminal region. The latter binding is assisted by an atg18-PtdIns3P interaction. Atg2 then extracts phospholipids from the membrane source using its NR and transfers them to atg9 to the IM through its predicted beta-sheet-rich structure for membrane expansion. This is Autophagy-related protein 2 (atg2) from Aspergillus terreus (strain NIH 2624 / FGSC A1156).